We begin with the raw amino-acid sequence, 32 residues long: Delta-conotoxin-like MVID (32 aa).

3 disulfides stabilise this stretch: Cys-3/Cys-18, Cys-10/Cys-22, and Cys-17/Cys-27. A 4-hydroxyproline modification is found at Pro-14.

Belongs to the conotoxin O1 superfamily. As to expression, expressed by the venom duct.

It is found in the secreted. In terms of biological role, delta-conotoxins bind to site 6 of voltage-gated sodium channels (Nav) and inhibit the inactivation process. This is Delta-conotoxin-like MVID from Conus magus (Magical cone).